Here is a 246-residue protein sequence, read N- to C-terminus: Ubiquinone biosynthesis O-methyltransferase (246 aa).

Residues Arg44, Gly63, Asp84, and Met128 each coordinate S-adenosyl-L-methionine.

Belongs to the methyltransferase superfamily. UbiG/COQ3 family.

The catalysed reaction is a 3-demethylubiquinol + S-adenosyl-L-methionine = a ubiquinol + S-adenosyl-L-homocysteine + H(+). It catalyses the reaction a 3-(all-trans-polyprenyl)benzene-1,2-diol + S-adenosyl-L-methionine = a 2-methoxy-6-(all-trans-polyprenyl)phenol + S-adenosyl-L-homocysteine + H(+). It functions in the pathway cofactor biosynthesis; ubiquinone biosynthesis. O-methyltransferase that catalyzes the 2 O-methylation steps in the ubiquinone biosynthetic pathway. This is Ubiquinone biosynthesis O-methyltransferase from Xylella fastidiosa (strain 9a5c).